Reading from the N-terminus, the 220-residue chain is Deoxyribose-phosphate aldolase (220 aa).

D89 acts as the Proton donor/acceptor in catalysis. K150 acts as the Schiff-base intermediate with acetaldehyde in catalysis. K182 serves as the catalytic Proton donor/acceptor.

Belongs to the DeoC/FbaB aldolase family. DeoC type 1 subfamily.

Its subcellular location is the cytoplasm. The catalysed reaction is 2-deoxy-D-ribose 5-phosphate = D-glyceraldehyde 3-phosphate + acetaldehyde. It functions in the pathway carbohydrate degradation; 2-deoxy-D-ribose 1-phosphate degradation; D-glyceraldehyde 3-phosphate and acetaldehyde from 2-deoxy-alpha-D-ribose 1-phosphate: step 2/2. Functionally, catalyzes a reversible aldol reaction between acetaldehyde and D-glyceraldehyde 3-phosphate to generate 2-deoxy-D-ribose 5-phosphate. This chain is Deoxyribose-phosphate aldolase, found in Mycoplasmoides pirum (Mycoplasma pirum).